A 29-amino-acid polypeptide reads, in one-letter code: MISDTQIFVALILALFSFVLAIRLGTSLY.

The chain crosses the membrane as a helical span at residues 7–26; sequence IFVALILALFSFVLAIRLGT.

It belongs to the PsaM family.

The protein resides in the plastid. It localises to the chloroplast thylakoid membrane. The sequence is that of Photosystem I reaction center subunit XII from Guillardia theta (Cryptophyte).